The chain runs to 823 residues: Protein Shroom1 (823 aa).

At Met1 the chain carries N-acetylmethionine. 3 disordered regions span residues 1-55 (MEAL…TERL), 72-110 (PTSKDAVLSTTQRPVQAVAGHSDPRSPEVQGSPGPLNRQ), and 124-159 (ATAHTAEPPSPPASRDAYRQRLQGAQRRVLRETSFQ). Polar residues-rich tracts occupy residues 28-50 (RADSAYSSFSTASGDPETRTPSP) and 72-85 (PTSKDAVLSTTQRP). Residues Ser103, Ser133, Ser137, Ser166, Ser190, and Ser224 each carry the phosphoserine modification. Residues 145-233 (LQGAQRRVLR…SEPGKLHRVG (89 aa)) form the ASD1 domain. The interval 181 to 200 (TAHVRSASSSQELGEEEPAR) is disordered. Disordered stretches follow at residues 270–303 (SSTELNSGPADLGNAHRPAGRSQSVSGEVMGPCK) and 349–375 (QTKPAGCGRRISETSVSTPGPSLPEDD). Thr383 is modified (phosphothreonine). A Phosphoserine modification is found at Ser385. Disordered regions lie at residues 420-503 (LHET…LTWG) and 566-620 (EMGE…STQA). Composition is skewed to polar residues over residues 444-468 (RPTSIPETTNDDIPTFDTNGTTDPS), 489-503 (SETPGSPHHTSLTWG), and 586-620 (QDLQTSQEASRSENSTPDPDQSSGQEFPEGNSTQA). Residues 517-796 (EALVQELARL…QLDTIWSDLS (280 aa)) enclose the ASD2 domain.

Belongs to the shroom family. As to quaternary structure, interacts with F-actin.

It localises to the cytoplasm. The protein localises to the cytoskeleton. Functionally, may be involved in the assembly of microtubule arrays during cell elongation. The protein is Protein Shroom1 (Shroom1) of Mus musculus (Mouse).